We begin with the raw amino-acid sequence, 237 residues long: Cyclic-di-GMP-binding biofilm dispersal mediator protein (237 aa).

NAD(+) is bound at residue 10–34 (LILGGSRGIGAAIVRRFVTDGANVR). Serine 132 contacts substrate. The active-site Proton acceptor is tyrosine 146.

It belongs to the short-chain dehydrogenases/reductases (SDR) family.

Functionally, increases biofilm dispersal. Acts by binding directly to the signaling molecule cyclic-di-GMP, which decreases the intracellular concentration of cyclic-di-GMP and leads to biofilm dispersal. Also controls other biofilm-related phenotypes such as cell motility, cell size, cell aggregation and production of extracellular DNA and extracellular polysaccharides (EPS). Does not act as a phosphodiesterase. This Escherichia coli (strain K12) protein is Cyclic-di-GMP-binding biofilm dispersal mediator protein (bdcA).